The following is a 99-amino-acid chain: NADH-quinone oxidoreductase subunit K (99 aa).

3 helical membrane passes run Pro3 to Ile23, Ile28 to Phe48, and Val59 to Ile79.

This sequence belongs to the complex I subunit 4L family. NDH-1 is composed of 14 different subunits. Subunits NuoA, H, J, K, L, M, N constitute the membrane sector of the complex.

The protein resides in the cell membrane. It catalyses the reaction a quinone + NADH + 5 H(+)(in) = a quinol + NAD(+) + 4 H(+)(out). Functionally, NDH-1 shuttles electrons from NADH, via FMN and iron-sulfur (Fe-S) centers, to quinones in the respiratory chain. The immediate electron acceptor for the enzyme in this species is believed to be a menaquinone. Couples the redox reaction to proton translocation (for every two electrons transferred, four hydrogen ions are translocated across the cytoplasmic membrane), and thus conserves the redox energy in a proton gradient. This chain is NADH-quinone oxidoreductase subunit K, found in Rhodococcus jostii (strain RHA1).